The chain runs to 151 residues: Large ribosomal subunit protein uL13 (151 aa).

Residues 129-151 (SNHPHQAQKPETLTINTIPGGNN) are disordered.

The protein belongs to the universal ribosomal protein uL13 family. In terms of assembly, part of the 50S ribosomal subunit.

Functionally, this protein is one of the early assembly proteins of the 50S ribosomal subunit, although it is not seen to bind rRNA by itself. It is important during the early stages of 50S assembly. In Gloeothece citriformis (strain PCC 7424) (Cyanothece sp. (strain PCC 7424)), this protein is Large ribosomal subunit protein uL13.